Consider the following 227-residue polypeptide: Phosphoribosylformylglycinamidine synthase subunit PurQ (227 aa).

The Glutamine amidotransferase type-1 domain maps to 3–225 (FAVIVFPGSN…LKYWRETYVV (223 aa)). Catalysis depends on Cys86, which acts as the Nucleophile. Catalysis depends on residues His194 and Glu196.

In terms of assembly, part of the FGAM synthase complex composed of 1 PurL, 1 PurQ and 2 PurS subunits.

The protein resides in the cytoplasm. It carries out the reaction N(2)-formyl-N(1)-(5-phospho-beta-D-ribosyl)glycinamide + L-glutamine + ATP + H2O = 2-formamido-N(1)-(5-O-phospho-beta-D-ribosyl)acetamidine + L-glutamate + ADP + phosphate + H(+). It catalyses the reaction L-glutamine + H2O = L-glutamate + NH4(+). The protein operates within purine metabolism; IMP biosynthesis via de novo pathway; 5-amino-1-(5-phospho-D-ribosyl)imidazole from N(2)-formyl-N(1)-(5-phospho-D-ribosyl)glycinamide: step 1/2. In terms of biological role, part of the phosphoribosylformylglycinamidine synthase complex involved in the purines biosynthetic pathway. Catalyzes the ATP-dependent conversion of formylglycinamide ribonucleotide (FGAR) and glutamine to yield formylglycinamidine ribonucleotide (FGAM) and glutamate. The FGAM synthase complex is composed of three subunits. PurQ produces an ammonia molecule by converting glutamine to glutamate. PurL transfers the ammonia molecule to FGAR to form FGAM in an ATP-dependent manner. PurS interacts with PurQ and PurL and is thought to assist in the transfer of the ammonia molecule from PurQ to PurL. The protein is Phosphoribosylformylglycinamidine synthase subunit PurQ of Bacillus cytotoxicus (strain DSM 22905 / CIP 110041 / 391-98 / NVH 391-98).